The following is a 1157-amino-acid chain: uncharacterized protein (1157 aa).

Positions 1 to 18 are cleaved as a signal peptide; the sequence is MNRNIFITLLISLLALSG. The N-palmitoyl cysteine moiety is linked to residue Cys-19. Cys-19 carries the S-diacylglycerol cysteine lipid modification. 4 consecutive transmembrane segments (helical) span residues 292–312, 394–414, 423–443, and 458–478; these read LSVS…FLIG, LGFI…LLIF, ALIT…FMLF, and ISYA…GMII. A disordered region spans residues 1134-1157; it reads QYQKPVENSGRKLRKLEDHLRNMK. Residues 1148–1157 show a composition bias toward basic and acidic residues; it reads KLEDHLRNMK.

It belongs to the TrbL/VirB6 family.

The protein resides in the cell membrane. This is an uncharacterized protein from Rickettsia bellii (strain RML369-C).